A 567-amino-acid chain; its full sequence is Proline--tRNA ligase (567 aa).

It belongs to the class-II aminoacyl-tRNA synthetase family. ProS type 1 subfamily. Homodimer.

Its subcellular location is the cytoplasm. The catalysed reaction is tRNA(Pro) + L-proline + ATP = L-prolyl-tRNA(Pro) + AMP + diphosphate. In terms of biological role, catalyzes the attachment of proline to tRNA(Pro) in a two-step reaction: proline is first activated by ATP to form Pro-AMP and then transferred to the acceptor end of tRNA(Pro). As ProRS can inadvertently accommodate and process non-cognate amino acids such as alanine and cysteine, to avoid such errors it has two additional distinct editing activities against alanine. One activity is designated as 'pretransfer' editing and involves the tRNA(Pro)-independent hydrolysis of activated Ala-AMP. The other activity is designated 'posttransfer' editing and involves deacylation of mischarged Ala-tRNA(Pro). The misacylated Cys-tRNA(Pro) is not edited by ProRS. This is Proline--tRNA ligase from Stenotrophomonas maltophilia (strain K279a).